A 287-amino-acid chain; its full sequence is Acetyl-coenzyme A carboxylase carboxyl transferase subunit beta (287 aa).

Residues 33–287 form the CoA carboxyltransferase N-terminal domain; sequence LFSKCPGCKH…TLLAFHGGQA (255 aa). Residues cysteine 37, cysteine 40, cysteine 55, and cysteine 58 each contribute to the Zn(2+) site. The C4-type zinc finger occupies 37-58; sequence CPGCKHTIYQKDLGNDSVCPNC.

Belongs to the AccD/PCCB family. As to quaternary structure, acetyl-CoA carboxylase is a heterohexamer composed of biotin carboxyl carrier protein (AccB), biotin carboxylase (AccC) and two subunits each of ACCase subunit alpha (AccA) and ACCase subunit beta (AccD). It depends on Zn(2+) as a cofactor.

It is found in the cytoplasm. The enzyme catalyses N(6)-carboxybiotinyl-L-lysyl-[protein] + acetyl-CoA = N(6)-biotinyl-L-lysyl-[protein] + malonyl-CoA. Its pathway is lipid metabolism; malonyl-CoA biosynthesis; malonyl-CoA from acetyl-CoA: step 1/1. In terms of biological role, component of the acetyl coenzyme A carboxylase (ACC) complex. Biotin carboxylase (BC) catalyzes the carboxylation of biotin on its carrier protein (BCCP) and then the CO(2) group is transferred by the transcarboxylase to acetyl-CoA to form malonyl-CoA. This is Acetyl-coenzyme A carboxylase carboxyl transferase subunit beta from Streptococcus sanguinis (strain SK36).